The following is a 209-amino-acid chain: Bcl-2 homologous antagonist/killer (209 aa).

Residues 1–28 are disordered; the sequence is MASGQGPGPPKVGCDESPSPSEQQVAQD. Alanine 2 is subject to N-acetylalanine. The segment covering 18-27 has biased composition (polar residues); sequence PSPSEQQVAQ. Positions 72 to 86 match the BH3 motif; it reads VGRQLALIGDDINRR. The short motif at 115–134 is the BH1 element; the sequence is SLFKSGISWGRVVALLGFGY. Residues aspartate 158 and histidine 162 each coordinate Zn(2+). The BH2 signature appears at 167–182; that stretch reads RWIAQRGGWVAALNFR. The helical transmembrane segment at 186 to 203 threads the bilayer; that stretch reads ILTVMVIFGVVLLGQFVV.

This sequence belongs to the Bcl-2 family. In terms of assembly, homodimer. Formation of the homodimer is zinc-dependent. Forms heterodimers with BCL2 and BCL2L1 isoform Bcl-X(L). Forms heterooligomers with BAX. Interacts with BCL2A1. Interacts withRTL10/BOP. Interacts with VDAC1. Interacts with GIMAP3/IAN4 and GIMAP5/IAN5. (Microbial infection) Interacts with gamma-herpesvirus 68 protein vBCL2. As to expression, widely expressed.

The protein localises to the mitochondrion outer membrane. Functionally, in the presence of an appropriate stimulus, accelerates programmed cell death by binding to, and antagonizing the anti-apoptotic action of BCL2. This is Bcl-2 homologous antagonist/killer (Bak1) from Mus musculus (Mouse).